A 193-amino-acid polypeptide reads, in one-letter code: ATP-dependent protease subunit HslV (193 aa).

Threonine 12 is an active-site residue. Na(+)-binding residues include alanine 167, cysteine 170, and threonine 173.

Belongs to the peptidase T1B family. HslV subfamily. A double ring-shaped homohexamer of HslV is capped on each side by a ring-shaped HslU homohexamer. The assembly of the HslU/HslV complex is dependent on binding of ATP.

It is found in the cytoplasm. The catalysed reaction is ATP-dependent cleavage of peptide bonds with broad specificity.. Allosterically activated by HslU binding. Its function is as follows. Protease subunit of a proteasome-like degradation complex believed to be a general protein degrading machinery. This is ATP-dependent protease subunit HslV from Bartonella quintana (strain Toulouse) (Rochalimaea quintana).